A 24-amino-acid polypeptide reads, in one-letter code: Small ribosomal subunit protein uS5 (24 aa).

The protein belongs to the universal ribosomal protein uS5 family. Part of the 30S ribosomal subunit. Contacts proteins S4 and S8.

Its function is as follows. With S4 and S12 plays an important role in translational accuracy. Located at the back of the 30S subunit body where it stabilizes the conformation of the head with respect to the body. This Vibrio proteolyticus (Aeromonas proteolytica) protein is Small ribosomal subunit protein uS5 (rpsE).